The sequence spans 1068 residues: Carbamoyl phosphate synthase large chain (1068 aa).

The interval 1-401 is carboxyphosphate synthetic domain; sequence MPRRTDLHRI…SLLKAVRSLE (401 aa). The ATP site is built by Arg-129, Arg-169, Gly-175, Gly-176, Gln-208, Ile-210, Glu-215, Gly-241, Val-242, His-243, Gln-284, and Glu-298. One can recognise an ATP-grasp 1 domain in the interval 133–327; the sequence is KQLMDELGQP…IAKIAAKIAV (195 aa). Gln-284, Glu-298, and Asn-300 together coordinate Mg(2+). Residues Gln-284, Glu-298, and Asn-300 each contribute to the Mn(2+) site. The segment at 402 to 546 is oligomerization domain; it reads IGVDHLALRE…YSTYEMENES (145 aa). The segment at 547–935 is carbamoyl phosphate synthetic domain; that stretch reads KKSQRPSVLV…ALYKVFEAAN (389 aa). One can recognise an ATP-grasp 2 domain in the interval 671–867; that stretch reads ESLLAELGIP…MAEVATRIIL (197 aa). ATP is bound by residues Arg-707, Arg-746, Leu-748, Glu-752, Gly-777, Val-778, His-779, Ser-780, Gln-820, and Glu-838. Residues Gln-820, Glu-838, and Asn-840 each contribute to the Mg(2+) site. Mn(2+) is bound by residues Gln-820, Glu-838, and Asn-840. One can recognise an MGS-like domain in the interval 936 to 1068; it reads LHVPEYGKIL…ESRVFSTESI (133 aa). Residues 936–1068 form an allosteric domain region; it reads LHVPEYGKIL…ESRVFSTESI (133 aa).

It belongs to the CarB family. In terms of assembly, composed of two chains; the small (or glutamine) chain promotes the hydrolysis of glutamine to ammonia, which is used by the large (or ammonia) chain to synthesize carbamoyl phosphate. Tetramer of heterodimers (alpha,beta)4. The cofactor is Mg(2+). It depends on Mn(2+) as a cofactor.

The enzyme catalyses hydrogencarbonate + L-glutamine + 2 ATP + H2O = carbamoyl phosphate + L-glutamate + 2 ADP + phosphate + 2 H(+). The catalysed reaction is hydrogencarbonate + NH4(+) + 2 ATP = carbamoyl phosphate + 2 ADP + phosphate + 2 H(+). It participates in amino-acid biosynthesis; L-arginine biosynthesis; carbamoyl phosphate from bicarbonate: step 1/1. It functions in the pathway pyrimidine metabolism; UMP biosynthesis via de novo pathway; (S)-dihydroorotate from bicarbonate: step 1/3. Its function is as follows. Large subunit of the glutamine-dependent carbamoyl phosphate synthetase (CPSase). CPSase catalyzes the formation of carbamoyl phosphate from the ammonia moiety of glutamine, carbonate, and phosphate donated by ATP, constituting the first step of 2 biosynthetic pathways, one leading to arginine and/or urea and the other to pyrimidine nucleotides. The large subunit (synthetase) binds the substrates ammonia (free or transferred from glutamine from the small subunit), hydrogencarbonate and ATP and carries out an ATP-coupled ligase reaction, activating hydrogencarbonate by forming carboxy phosphate which reacts with ammonia to form carbamoyl phosphate. The protein is Carbamoyl phosphate synthase large chain of Cutibacterium acnes (strain DSM 16379 / KPA171202) (Propionibacterium acnes).